The sequence spans 484 residues: Arginine ADP-riboxanase OspC2 (484 aa).

11 residues coordinate NAD(+): His143, Gln144, Ser145, Leu149, Ile162, Asn172, Phe188, His206, Phe211, Asp231, and Glu326. Residue Glu326 is part of the active site. ANK repeat units follow at residues 414-444 (LYDV…DVNK) and 451-480 (SGDT…VSGK).

Belongs to the OspC family.

The protein localises to the secreted. The enzyme catalyses L-arginyl-[protein] + NAD(+) = ADP-riboxanated L-argininyl-[protein] + nicotinamide + NH4(+) + H(+). In terms of biological role, ADP-riboxanase effector that mediates arginine ADP-riboxanation of host caspases. ADP-riboxanation of host apoptotic caspases (CASP3 and CASP9) prevents their activation, thereby inhibiting host cell extrinsic and intrinsic apoptosis. Does not catalyze ADP-riboxanation of host CASP4/CASP11 or CASP8. In contrast to Ospc1 and OspC3, not able to inactivate host calmodulin. The protein is Arginine ADP-riboxanase OspC2 of Shigella flexneri.